A 1043-amino-acid chain; its full sequence is Protein SLOW WALKER 2 (1043 aa).

Disordered stretches follow at residues 32–113 (SALP…SIDD), 444–469 (QGADDKGAADKKKSNPKDTKQEVSTD), 632–737 (DIEH…GGYD), and 861–1043 (SKKK…KASE). The short motif at 44-51 (FRKPAKSK) is the Nuclear localization signal 1 element. Basic residues predominate over residues 47–59 (PAKSKTQKRKKPK). Composition is skewed to basic and acidic residues over residues 80-95 (EKGKDFGARKQNKDAP) and 444-466 (QGADDKGAADKKKSNPKDTKQEV). The Nuclear localization signal 2 signature appears at 441-448 (NRKQGADD). Acidic residues predominate over residues 632-645 (DIEHFEDVIEGDDV). The segment covering 646–673 (DPNKKAENDENVVEVDHDGVEKSSRDGD) has biased composition (basic and acidic residues). 2 stretches are compositionally biased toward acidic residues: residues 688-699 (DEEDDNASDDSE) and 872-983 (EEAA…DSDG). Positions 988–1000 (SKKKKKEKRKRKS) are enriched in basic residues. The segment covering 1006 to 1031 (EEYKHLIDQDEKEDSKTKRKATSEPT) has biased composition (basic and acidic residues). The short motif at 1022–1029 (TKRKATSE) is the Nuclear localization signal 3 element. Over residues 1032-1043 (KKKKKKKSKASE) the composition is skewed to basic residues.

Belongs to the CBF/MAK21 family. In terms of assembly, interacts with RBL in both the nucleolus and nucleoplasm. Binds to NOC2. In terms of tissue distribution, mainly expressed in actively dividing tissues (e.g. root tips, lateral root primordia, shoot apices, young leaves, inflorescences and pollen grains) through the plant, including roots, stems, leaves, inflorescences, siliques and seedlings, and in gametophytes.

The protein localises to the nucleus. Its subcellular location is the nucleolus. Functionally, together with NOC2, probably involved in pre-ribosome export from the nucleus to the cytoplasm. Required for coordinated cell cycle progression during female gametophyte and pollen development. The sequence is that of Protein SLOW WALKER 2 from Arabidopsis thaliana (Mouse-ear cress).